A 361-amino-acid chain; its full sequence is Putative dual-specificity RNA methyltransferase RlmN (361 aa).

The active-site Proton acceptor is the E91. The Radical SAM core domain maps to 97–329 (QHYGLSVCVT…KKKGVNCVVR (233 aa)). 3 residues coordinate [4Fe-4S] cluster: C111, C115, and C118. Residues 163 to 164 (GE), S195, 218 to 220 (SLH), and T296 each bind S-adenosyl-L-methionine.

The protein belongs to the radical SAM superfamily. RlmN family. It depends on [4Fe-4S] cluster as a cofactor.

The protein resides in the cytoplasm. It carries out the reaction adenosine(2503) in 23S rRNA + 2 reduced [2Fe-2S]-[ferredoxin] + 2 S-adenosyl-L-methionine = 2-methyladenosine(2503) in 23S rRNA + 5'-deoxyadenosine + L-methionine + 2 oxidized [2Fe-2S]-[ferredoxin] + S-adenosyl-L-homocysteine. The catalysed reaction is adenosine(37) in tRNA + 2 reduced [2Fe-2S]-[ferredoxin] + 2 S-adenosyl-L-methionine = 2-methyladenosine(37) in tRNA + 5'-deoxyadenosine + L-methionine + 2 oxidized [2Fe-2S]-[ferredoxin] + S-adenosyl-L-homocysteine. In terms of biological role, specifically methylates position 2 of adenine 2503 in 23S rRNA and position 2 of adenine 37 in tRNAs. The chain is Putative dual-specificity RNA methyltransferase RlmN from Streptococcus pneumoniae (strain CGSP14).